A 313-amino-acid chain; its full sequence is Methionyl-tRNA formyltransferase (313 aa).

Residue 110–113 (SLLP) coordinates (6S)-5,6,7,8-tetrahydrofolate.

This sequence belongs to the Fmt family.

It carries out the reaction L-methionyl-tRNA(fMet) + (6R)-10-formyltetrahydrofolate = N-formyl-L-methionyl-tRNA(fMet) + (6S)-5,6,7,8-tetrahydrofolate + H(+). In terms of biological role, attaches a formyl group to the free amino group of methionyl-tRNA(fMet). The formyl group appears to play a dual role in the initiator identity of N-formylmethionyl-tRNA by promoting its recognition by IF2 and preventing the misappropriation of this tRNA by the elongation apparatus. This is Methionyl-tRNA formyltransferase from Enterococcus faecalis (strain ATCC 700802 / V583).